We begin with the raw amino-acid sequence, 254 residues long: 3-deoxy-manno-octulosonate cytidylyltransferase (254 aa).

It belongs to the KdsB family.

It is found in the cytoplasm. It carries out the reaction 3-deoxy-alpha-D-manno-oct-2-ulosonate + CTP = CMP-3-deoxy-beta-D-manno-octulosonate + diphosphate. The protein operates within nucleotide-sugar biosynthesis; CMP-3-deoxy-D-manno-octulosonate biosynthesis; CMP-3-deoxy-D-manno-octulosonate from 3-deoxy-D-manno-octulosonate and CTP: step 1/1. Its pathway is bacterial outer membrane biogenesis; lipopolysaccharide biosynthesis. Functionally, activates KDO (a required 8-carbon sugar) for incorporation into bacterial lipopolysaccharide in Gram-negative bacteria. The sequence is that of 3-deoxy-manno-octulosonate cytidylyltransferase from Pseudomonas syringae pv. tomato (strain ATCC BAA-871 / DC3000).